Here is a 1050-residue protein sequence, read N- to C-terminus: DNA-directed RNA polymerase subunit beta (1050 aa).

It belongs to the RNA polymerase beta chain family. In plastids the minimal PEP RNA polymerase catalytic core is composed of four subunits: alpha, beta, beta', and beta''. When a (nuclear-encoded) sigma factor is associated with the core the holoenzyme is formed, which can initiate transcription (Potential).

The protein localises to the plastid. It localises to the apicoplast. It catalyses the reaction RNA(n) + a ribonucleoside 5'-triphosphate = RNA(n+1) + diphosphate. Its function is as follows. DNA-dependent RNA polymerase catalyzes the transcription of DNA into RNA using the four ribonucleoside triphosphates as substrates. This Neospora caninum (Coccidian parasite) protein is DNA-directed RNA polymerase subunit beta (rpoB).